Consider the following 122-residue polypeptide: Secreted RxLR effector protein RXLR-C251 (122 aa).

Residues 1–24 form the signal peptide; it reads MRFFYKLALMTTVASLACSDTALA. Positions 48–51 match the RxLR motif; the sequence is RSLR.

Belongs to the RxLR effector family.

The protein resides in the secreted. It is found in the host cytoplasm. Its subcellular location is the host nucleus. In terms of biological role, secreted effector that does not suppress pattern-triggered immunity (PTI) in plant host. The sequence is that of Secreted RxLR effector protein RXLR-C251 from Plasmopara halstedii (Downy mildew of sunflower).